Reading from the N-terminus, the 134-residue chain is Secretin (134 aa).

The first 21 residues, 1–21, serve as a signal peptide directing secretion; that stretch reads MATRALLLLLLLPPLLLLAGC. Residues 22 to 31 constitute a propeptide that is removed on maturation; sequence AARPAPPRAP. At valine 59 the chain carries Valine amide. Serine 63 is subject to Phosphoserine. The propeptide occupies 63 to 134; the sequence is SQQDPENNTA…PAAEGSPMPP (72 aa).

This sequence belongs to the glucagon family.

The protein localises to the secreted. In terms of biological role, hormone involved in different processes, such as regulation of the pH of the duodenal content, food intake and water homeostasis. Exerts its biological effects by binding to secretin receptor (SCTR), a G-protein coupled receptor expressed in the basolateral domain of several cells. Acts as a key gastrointestinal hormone by regulating the pH of the duodenal content. Secreted by S cells of the duodenum in the crypts of Lieberkuehn and regulates the pH of the duodenum by (1) inhibiting the secretion of gastric acid from the parietal cells of the stomach and (2) stimulating the production of bicarbonate (NaHCO(3)) from the ductal cells of the pancreas. Production of bicarbonate is essential to neutralize the pH and ensure no damage is done to the small intestine by the gastric acid. In addition to regulating the pH of the duodenal content, plays a central role in diet induced thermogenesis: acts as a non-sympathetic brown fat (BAT) activator mediating prandial thermogenesis, which consequentially induces satiation. Mechanistically, secretin released by the gut after a meal binds to secretin receptor (SCTR) in brown adipocytes, activating brown fat thermogenesis by stimulating lipolysis, which is sensed in the brain and promotes satiation. Also able to stimulate lipolysis in white adipocytes. Also plays an important role in cellular osmoregulation: released into the systemic circulation in response to hyperosmolality and acts at different levels in the hypothalamus, pituitary and kidney to regulate water homeostasis. Also plays a role in the central nervous system, possibly by acting as a neuropeptide hormone: required for hippocampal synaptic function and neural progenitor cells maintenance. In Sus scrofa (Pig), this protein is Secretin.